Reading from the N-terminus, the 225-residue chain is Translation initiation factor 6 (225 aa).

This sequence belongs to the eIF-6 family.

Functionally, binds to the 50S ribosomal subunit and prevents its association with the 30S ribosomal subunit to form the 70S initiation complex. This Hyperthermus butylicus (strain DSM 5456 / JCM 9403 / PLM1-5) protein is Translation initiation factor 6.